Reading from the N-terminus, the 649-residue chain is Macrolide export ATP-binding/permease protein MacB 1 (649 aa).

Residues 5–243 (LELEGIRRSY…AAAELMSLTP (239 aa)) enclose the ABC transporter domain. ATP is bound at residue 41–48 (GASGSGKS). The next 5 membrane-spanning stretches (helical) occupy residues 274 to 294 (ALTM…LVVG), 420 to 440 (VVGQ…VVAE), 524 to 544 (LFLT…VMNI), 578 to 598 (VLVC…IGLI), and 608 to 628 (IAFP…IGVV).

Belongs to the ABC transporter superfamily. Macrolide exporter (TC 3.A.1.122) family. As to quaternary structure, homodimer. Part of the tripartite efflux system MacAB-TolC, which is composed of an inner membrane transporter, MacB, a periplasmic membrane fusion protein, MacA, and an outer membrane component, TolC. The complex forms a large protein conduit and can translocate molecules across both the inner and outer membranes. Interacts with MacA.

The protein resides in the cell inner membrane. Functionally, part of the tripartite efflux system MacAB-TolC. MacB is a non-canonical ABC transporter that contains transmembrane domains (TMD), which form a pore in the inner membrane, and an ATP-binding domain (NBD), which is responsible for energy generation. Confers resistance against macrolides. This chain is Macrolide export ATP-binding/permease protein MacB 1, found in Yersinia pestis bv. Antiqua (strain Antiqua).